A 394-amino-acid polypeptide reads, in one-letter code: CLKTLSVFLAAFAAADARAVFKTQGHKNSEMIPDNYIVVMKDGVSQDDFKAHVSSVASIHSTNKAKRGTNTEGMKREFDIMNWRGYHGHFDRDTLEEILNDSKVDYVEQDQVVRISGLVTQRGAPSWGLGRVSHRQAGSRDYVFDDSAGRGVTIYGVDTGIDINHQDFRGRARWGTNTADRDNADRHGHGTHTASTFAGTAYGIAKNANIVAVKVLSSDGSGSTSGIIAGINYCVQDAQQRGILGKAAMNLSLGGGFSQANNDAVTRAQNAGIFVAVAAGNDNRDARNYSPASAPAVCTVASSTINDSKSSFSNWGPVVDIYAPGSDIIAARPGGGSTTMSGTSMASPHVAGMGAYMIGLGADPRSLCDRLKQLATPAIRNPGSSTTNRLLYNG.

A signal peptide spans Cys1–Ala17. The propeptide occupies Arg18–Ser116. In terms of domain architecture, Inhibitor I9 spans Tyr36–Ile115. N-linked (GlcNAc...) asparagine glycosylation occurs at Asn100. A Peptidase S8 domain is found at Ser126–Gly394. Catalysis depends on charge relay system residues Asp158 and His189. 2 N-linked (GlcNAc...) asparagine glycosylation sites follow: Asn250 and Asn306. Residue Ser344 is the Charge relay system of the active site.

The protein belongs to the peptidase S8 family.

Its subcellular location is the secreted. Functionally, secreted subtilisin-like serine protease with keratinolytic activity that contributes to pathogenicity. This is Subtilisin-like protease 4 (SUB4) from Trichophyton equinum (Horse ringworm fungus).